The chain runs to 684 residues: uncharacterized protein (684 aa).

Residues 54 to 239 enclose the Helicase ATP-binding domain; sequence LKYLYNKKDV…LLFNRDFEVV (186 aa). 67-74 is an ATP binding site; that stretch reads TSTASGKS. The short motif at 181-184 is the DEVH box element; it reads DELH. Positions 264–419 constitute a Helicase C-terminal domain; it reads LLRRLIENLV…YMPVNIKNRF (156 aa).

It belongs to the helicase family.

This is an uncharacterized protein from Methanocaldococcus jannaschii (strain ATCC 43067 / DSM 2661 / JAL-1 / JCM 10045 / NBRC 100440) (Methanococcus jannaschii).